The sequence spans 821 residues: Elongator complex protein 2 (821 aa).

WD repeat units follow at residues Gly-56–Ser-100, Gly-105–Leu-152, Gly-160–Met-200, Gly-205–Glu-246, Gly-280–Leu-328, Gly-338–Trp-377, Gly-385–Gln-424, Ile-435–Phe-473, Gly-563–Ser-607, Tyr-610–Phe-649, Val-665–Met-704, Asp-716–Lys-760, and Ser-773–Leu-821.

Belongs to the WD repeat ELP2 family. In terms of assembly, component of the elongator complex which consists of ELP1, ELP2, ELP3, ELP4, ELP5 and ELP6. Interacts with STAT3 and JAKs.

It is found in the cytoplasm. It localises to the nucleus. Its pathway is tRNA modification; 5-methoxycarbonylmethyl-2-thiouridine-tRNA biosynthesis. Component of the elongator complex which is required for multiple tRNA modifications, including mcm5U (5-methoxycarbonylmethyl uridine), mcm5s2U (5-methoxycarbonylmethyl-2-thiouridine), and ncm5U (5-carbamoylmethyl uridine). The elongator complex catalyzes the formation of carboxymethyluridine in the wobble base at position 34 in tRNAs. The sequence is that of Elongator complex protein 2 (Elp2) from Rattus norvegicus (Rat).